A 166-amino-acid polypeptide reads, in one-letter code: Ribosome maturation factor RimM (166 aa).

Residues 90–163 (EGEFLVSQII…TVTIELLEGL (74 aa)) form the PRC barrel domain.

The protein belongs to the RimM family. Binds ribosomal protein uS19.

It localises to the cytoplasm. An accessory protein needed during the final step in the assembly of 30S ribosomal subunit, possibly for assembly of the head region. Essential for efficient processing of 16S rRNA. May be needed both before and after RbfA during the maturation of 16S rRNA. It has affinity for free ribosomal 30S subunits but not for 70S ribosomes. In Oenococcus oeni (strain ATCC BAA-331 / PSU-1), this protein is Ribosome maturation factor RimM.